A 454-amino-acid polypeptide reads, in one-letter code: MLDKNTNLTHQSKIEFVNSNLRGIGFVNNTKIEVPYSLPGDVYNVTFFKKKRRKPSAKLELVSQTQRSFIPPCSAFTKCGGCCAQHISYQDQFRYKTSSLLESYKKDFEIVPTLYPAQKTFYYRNRMDFAVFPGPIVGQREAGSFRHIVDLETCLIQSKESNEELYRFRNLISKFPNLPYDRKSDSGFLKYFTLRKAKNTSELMTILTFVEEFKNTIEEKEFENVCLKSLKADHILFCFNRRKGEISATGEIKILKGMDSYKELVCGKEFRVPFDSFFQPNPEGFQPILDFIEKEIPDSFDHLVDLFCGSGFFSRIFAHKFLKITGIDSIESSLEIARKQMSLDFPKIDSSYLKVDLFSKNSSSKLKVLFSSSDKDVLIADPPRAGLGEFVLDALKDSKVSYFFYVSCNPTSQKSDLWKLKDFFQIQKILITDPYPQTPHLESVAFLKRKNFTT.

Cysteine 73, cysteine 79, cysteine 82, and cysteine 154 together coordinate [4Fe-4S] cluster. Positions 279, 307, 328, and 381 each coordinate S-adenosyl-L-methionine. Catalysis depends on cysteine 408, which acts as the Nucleophile.

Belongs to the class I-like SAM-binding methyltransferase superfamily. RNA M5U methyltransferase family.

This is an uncharacterized protein from Leptospira interrogans serogroup Icterohaemorrhagiae serovar Lai (strain 56601).